A 299-amino-acid polypeptide reads, in one-letter code: UDP-N-acetylenolpyruvoylglucosamine reductase (299 aa).

The FAD-binding PCMH-type domain maps to 19-192 (LGGQALAEVR…AAVTLQLRRS (174 aa)). Residue Arg-169 is part of the active site. The Proton donor role is filled by Cys-221. Glu-292 is a catalytic residue.

It belongs to the MurB family. It depends on FAD as a cofactor.

The protein resides in the cytoplasm. The catalysed reaction is UDP-N-acetyl-alpha-D-muramate + NADP(+) = UDP-N-acetyl-3-O-(1-carboxyvinyl)-alpha-D-glucosamine + NADPH + H(+). Its pathway is cell wall biogenesis; peptidoglycan biosynthesis. Cell wall formation. This Oleidesulfovibrio alaskensis (strain ATCC BAA-1058 / DSM 17464 / G20) (Desulfovibrio alaskensis) protein is UDP-N-acetylenolpyruvoylglucosamine reductase.